The sequence spans 419 residues: Elongation factor Tu, chloroplastic (419 aa).

The tr-type G domain maps to 10-214 (KPHVNIGTIG…KVDEYIPTPD (205 aa)). The tract at residues 19-26 (GHVDHGKT) is G1. GTP is bound at residue 19–26 (GHVDHGKT). T26 serves as a coordination point for Mg(2+). Residues 60-64 (GITIN) form a G2 region. Positions 81 to 84 (DCPG) are G3. GTP is bound by residues 81-85 (DCPGH) and 136-139 (NKED). A G4 region spans residues 136–139 (NKED). The interval 174 to 176 (SAL) is G5.

Belongs to the TRAFAC class translation factor GTPase superfamily. Classic translation factor GTPase family. EF-Tu/EF-1A subfamily.

Its subcellular location is the plastid. It is found in the chloroplast. It catalyses the reaction GTP + H2O = GDP + phosphate + H(+). GTP hydrolase that promotes the GTP-dependent binding of aminoacyl-tRNA to the A-site of ribosomes during protein biosynthesis. This Tetradesmus obliquus (Green alga) protein is Elongation factor Tu, chloroplastic (tufA).